The following is a 283-amino-acid chain: Probable 3-deoxy-manno-octulosonic acid transferase (283 aa).

It localises to the cytoplasm. The catalysed reaction is an alpha-Kdo-(2-&gt;4)-alpha-Kdo-(2-&gt;6)-lipid IVA + CMP-3-deoxy-beta-D-manno-octulosonate = an alpha-Kdo-(2-&gt;4)-alpha-Kdo-(2-&gt;4)-alpha-Kdo-(2-&gt;6)-lipid IVA + CMP + H(+). It carries out the reaction alpha-Kdo-(2-&gt;4)-alpha-Kdo-(2-&gt;6)-lipid IVA (E. coli) + CMP-3-deoxy-beta-D-manno-octulosonate = alpha-Kdo-(2-&gt;4)-alpha-Kdo-(2-&gt;4)-alpha-Kdo-(2-&gt;6)-lipid IVA + CMP + H(+). Its pathway is bacterial outer membrane biogenesis; LPS core biosynthesis. It participates in bacterial outer membrane biogenesis; LOS core biosynthesis. In terms of biological role, involved in the biosynthesis of the core oligosaccharide region of lipopolysaccharide (LPS). Required for the addition of 3-deoxy-D-manno-oct-2-ulosonic acid III (KdoIII) to the KdoII residue of the inner lipopolysaccharide core. May also play a role in a lipooligosaccharide (LOS) biosynthesis pathway. This chain is Probable 3-deoxy-manno-octulosonic acid transferase, found in Escherichia coli (strain K12).